The following is a 526-amino-acid chain: Butyrophilin subfamily 1 member A1 (526 aa).

Residues 1-26 form the signal peptide; the sequence is MAVFPNSCLAGCLLIFILLQLPKLDS. Ig-like V-type domains are found at residues 27-140 and 148-234; these read APFD…VHLK and PHIS…VEVS. At 27–242 the chain is on the extracellular side; it reads APFDVIGPQE…VSIPASFFPR (216 aa). Disulfide bonds link Cys-50–Cys-124 and Cys-164–Cys-218. Asn-55 is a glycosylation site (N-linked (GlcNAc...) (complex) asparagine). N-linked (GlcNAc...) (hybrid) asparagine glycosylation is present at Asn-215. The helical transmembrane segment at 243-269 threads the bilayer; it reads LTPWMVAVAVILVVLGLLTIGSIFFTW. At 270–526 the chain is on the cytoplasmic side; that stretch reads RLYKERSRQR…IPLQPSQGVP (257 aa). One can recognise a B30.2/SPRY domain in the interval 285-479; it reads SKEKLLEELK…LTICPVTDGL (195 aa).

It belongs to the immunoglobulin superfamily. BTN/MOG family. Seems to associate with xanthine dehydrogenase/oxidase. As to expression, expressed in mammary tissue.

The protein resides in the membrane. Its function is as follows. May function in the secretion of milk-fat droplets. May act as a specific membrane-associated receptor for the association of cytoplasmic droplets with the apical plasma membrane. Inhibits the proliferation of CD4 and CD8 T-cells activated by anti-CD3 antibodies, T-cell metabolism and IL2 and IFNG secretion. This chain is Butyrophilin subfamily 1 member A1 (BTN1A1), found in Bos taurus (Bovine).